Consider the following 296-residue polypeptide: Acetyl-coenzyme A carboxylase carboxyl transferase subunit beta (296 aa).

In terms of domain architecture, CoA carboxyltransferase N-terminal spans 26 to 295; it reads VWTKCTNCEQ…PFKVGELIIE (270 aa). Residues cysteine 30, cysteine 33, cysteine 49, and cysteine 52 each coordinate Zn(2+). The segment at 30-52 adopts a C4-type zinc-finger fold; the sequence is CTNCEQVLYSEELKRNMQVCPKC.

This sequence belongs to the AccD/PCCB family. Acetyl-CoA carboxylase is a heterohexamer composed of biotin carboxyl carrier protein (AccB), biotin carboxylase (AccC) and two subunits each of ACCase subunit alpha (AccA) and ACCase subunit beta (AccD). The cofactor is Zn(2+).

Its subcellular location is the cytoplasm. The catalysed reaction is N(6)-carboxybiotinyl-L-lysyl-[protein] + acetyl-CoA = N(6)-biotinyl-L-lysyl-[protein] + malonyl-CoA. The protein operates within lipid metabolism; malonyl-CoA biosynthesis; malonyl-CoA from acetyl-CoA: step 1/1. In terms of biological role, component of the acetyl coenzyme A carboxylase (ACC) complex. Biotin carboxylase (BC) catalyzes the carboxylation of biotin on its carrier protein (BCCP) and then the CO(2) group is transferred by the transcarboxylase to acetyl-CoA to form malonyl-CoA. In Haemophilus ducreyi (strain 35000HP / ATCC 700724), this protein is Acetyl-coenzyme A carboxylase carboxyl transferase subunit beta.